Consider the following 418-residue polypeptide: Tyrosine--tRNA ligase (418 aa).

Position 34 (Y34) interacts with L-tyrosine. Residues P39–H48 carry the 'HIGH' region motif. L-tyrosine-binding residues include Y169 and Q173. The 'KMSKS' region signature appears at K229 to S233. K232 contacts ATP. In terms of domain architecture, S4 RNA-binding spans N352–Y418.

Belongs to the class-I aminoacyl-tRNA synthetase family. TyrS type 1 subfamily. As to quaternary structure, homodimer.

The protein resides in the cytoplasm. It catalyses the reaction tRNA(Tyr) + L-tyrosine + ATP = L-tyrosyl-tRNA(Tyr) + AMP + diphosphate + H(+). Its function is as follows. Catalyzes the attachment of tyrosine to tRNA(Tyr) in a two-step reaction: tyrosine is first activated by ATP to form Tyr-AMP and then transferred to the acceptor end of tRNA(Tyr). This is Tyrosine--tRNA ligase from Streptococcus pneumoniae serotype 19F (strain G54).